A 644-amino-acid chain; its full sequence is Chaperone protein DnaK (644 aa).

Thr-199 is modified (phosphothreonine; by autocatalysis). The segment at 602–644 (IYAKKSSEGQTAQGQTQSQESTKPAEEGVVDAEFEEVKEEDKK) is disordered. Residues 609–623 (EGQTAQGQTQSQEST) are compositionally biased toward polar residues. The span at 629–644 (GVVDAEFEEVKEEDKK) shows a compositional bias: acidic residues.

The protein belongs to the heat shock protein 70 family.

Functionally, acts as a chaperone. The chain is Chaperone protein DnaK from Legionella pneumophila (strain Lens).